Consider the following 289-residue polypeptide: Phosphoribulokinase (289 aa).

ATP is bound at residue 12–20; sequence GSSGAGTTT.

The protein belongs to the phosphoribulokinase family.

The catalysed reaction is D-ribulose 5-phosphate + ATP = D-ribulose 1,5-bisphosphate + ADP + H(+). It participates in carbohydrate biosynthesis; Calvin cycle. The sequence is that of Phosphoribulokinase (cbbP) from Sinorhizobium medicae (strain WSM419) (Ensifer medicae).